We begin with the raw amino-acid sequence, 412 residues long: Divalent metal cation transporter MntH (412 aa).

Residues 1–19 (MTNYRVESSSGRAARKMRL) are Cytoplasmic-facing. A helical transmembrane segment spans residues 20 to 39 (ALMGPAFIAAIGYIDPGNFA). At 40-51 (TNIQAGASFGYQ) the chain is on the periplasmic side. The helical transmembrane segment at 52–71 (LLWVVVWANLMAMLIQILSA) threads the bilayer. Residues 72–95 (KLGIATGKNLAEQIRDHYPRPVVW) lie on the Cytoplasmic side of the membrane. Residues 96 to 118 (FYWVQAEIIAMATDLAEFIGAAI) traverse the membrane as a helical segment. Residues 119-125 (GFKLILG) are Periplasmic-facing. Residues 126–145 (VSLLQGAVLTGIATFLILML) traverse the membrane as a helical segment. The Cytoplasmic segment spans residues 146-155 (QRRGQKPLEK). The helical transmembrane segment at 156–175 (VIGGLLLFVAAAYIVELIFS) threads the bilayer. Residues 176-196 (QPNLAQLGKGMVIPSLPTSEA) lie on the Periplasmic side of the membrane. Residues 197–220 (VFLAAGVLGATIMPHVIYLHSSLT) form a helical membrane-spanning segment. At 221-238 (QHLHGGSRQQRYSATKWD) the chain is on the cytoplasmic side. A helical transmembrane segment spans residues 239–258 (VAIAMTIAGFVNLAMMATAA). Residues 259–276 (AAFHFSGHTGVADLDEAY) lie on the Periplasmic side of the membrane. The chain crosses the membrane as a helical span at residues 277–297 (LTLQPLLSHAAATVFGLSLVA). Over 298–327 (AGLSSTVVGTLAGQVVMQGFIRFHIPLWVR) the chain is Cytoplasmic. A helical membrane pass occupies residues 328 to 344 (RTVTMLPSFIVILMGLD). Residues 345 to 350 (PTRILV) lie on the Periplasmic side of the membrane. Residues 351-370 (MSQVLLSFGIALALVPLLIF) traverse the membrane as a helical segment. The Cytoplasmic portion of the chain corresponds to 371–387 (TSDSKLMGDLVNSKRVK). A helical membrane pass occupies residues 388–406 (QTGWVIVVLVVALNIWLLV). At 407 to 412 (GTALGL) the chain is on the periplasmic side.

Belongs to the NRAMP family.

It localises to the cell inner membrane. In terms of biological role, h(+)-stimulated, divalent metal cation uptake system. In Escherichia fergusonii (strain ATCC 35469 / DSM 13698 / CCUG 18766 / IAM 14443 / JCM 21226 / LMG 7866 / NBRC 102419 / NCTC 12128 / CDC 0568-73), this protein is Divalent metal cation transporter MntH.